The following is a 351-amino-acid chain: Probable V-type proton ATPase subunit d (351 aa).

The protein belongs to the V-ATPase V0D/AC39 subunit family. V-ATPase is a heteromultimeric enzyme composed of a peripheral catalytic V1 complex (components A to H) attached to an integral membrane V0 proton pore complex (components: a, c, c', c'' and d).

Its function is as follows. Subunit of the integral membrane V0 complex of vacuolar ATPase. Vacuolar ATPase is responsible for acidifying a variety of intracellular compartments in eukaryotic cells, thus providing most of the energy required for transport processes in the vacuolar system. This chain is Probable V-type proton ATPase subunit d, found in Oryza sativa subsp. japonica (Rice).